Here is a 31-residue protein sequence, read N- to C-terminus: Alpha-conotoxin Li1.12 (31 aa).

A propeptide spanning residues 1-15 (AGNAKMSALMALTIR) is cleaved from the precursor. Disulfide bonds link cysteine 17–cysteine 23 and cysteine 18–cysteine 30. Cysteine 30 bears the Cysteine amide mark.

It belongs to the conotoxin A superfamily. In terms of tissue distribution, expressed by the venom duct.

The protein localises to the secreted. Alpha-conotoxins act on postsynaptic membranes, they bind to the nicotinic acetylcholine receptors (nAChR) and thus inhibit them. This toxin inhibits alpha-3-beta-4, alpha-6/alpha-3-beta-4, and alpha-2-beta-4 nAChRs. This is Alpha-conotoxin Li1.12 from Conus lividus (Livid cone).